A 197-amino-acid polypeptide reads, in one-letter code: RNA polymerase II subunit A C-terminal domain phosphatase ssup-72 (197 aa).

S39 bears the Phosphoserine mark.

Belongs to the SSU72 phosphatase family. May interact with synd-1 (via C-terminus); the interaction may prevent ssup-72 binding to RNA polymerase II ama-1. May interact with RNA polymerase II ama-1. Post-translationally, may be phosphorylated by kin-20. Expressed in epidermis, intestine and nervous system.

The protein resides in the nucleus. It catalyses the reaction O-phospho-L-seryl-[protein] + H2O = L-seryl-[protein] + phosphate. The catalysed reaction is O-phospho-L-threonyl-[protein] + H2O = L-threonyl-[protein] + phosphate. In terms of biological role, protein phosphatase that dephosphorylates 'Ser-5' of the heptad repeats YSPTSPS in the C-terminal domain of the large RNA polymerase II subunit ama-1. By regulating the phosphorylation status of ama-1 and thus ama-1 binding to specific polyadenylation sites, regulates alternative polyadenylation of pre-mRNAs, including unc-44 and dlk-1 mRNAs. This results in the tissue-specific expression of unc-44 isoforms. This chain is RNA polymerase II subunit A C-terminal domain phosphatase ssup-72, found in Caenorhabditis elegans.